The primary structure comprises 250 residues: Transmembrane ascorbate-dependent reductase CYB561 (250 aa).

Residue Met-1 is modified to N-acetylmethionine. The Cytoplasmic segment spans residues 1 to 15 (MEHSSASVPAALPYY). The chain crosses the membrane as a helical span at residues 16-36 (VAFSQLLGLTVVAVTGAWLGL). In terms of domain architecture, Cytochrome b561 spans 18 to 219 (FSQLLGLTVV…FGVVVLYILA (202 aa)). Topologically, residues 37–50 (YRGGIAWESSLQFN) are vesicular. Residues 51 to 71 (VHPLCMVIGMIFLQGDALLVY) traverse the membrane as a helical segment. 3 residues coordinate heme b: His-52, Arg-72, and Lys-79. Residues 72-83 (RVFRREAKRTTK) lie on the Cytoplasmic side of the membrane. L-ascorbate-binding residues include Lys-79 and Lys-83. A helical transmembrane segment spans residues 84 to 104 (ILHGLLHVFAFIIALVGLVAV). Residues His-86, 115–118 (DLYS), and His-120 contribute to the heme b site. Residues 105–123 (FDYHKKKGYADLYSLHSWC) lie on the Vesicular side of the membrane. A helical transmembrane segment spans residues 124 to 144 (GILVFVLYFVQWLVGFSFFLF). The Cytoplasmic segment spans residues 145–157 (PGASFSLRSRYRP). Arg-152 lines the L-ascorbate pocket. The chain crosses the membrane as a helical span at residues 158–178 (QHIFFGATIFLFSVGTALLGL). Positions 159 and 180 each coordinate heme b. At 179–197 (KEALLFKLGSKYSTFEPEG) the chain is on the vesicular side. Residues 198–218 (VLANVLGLLLVCFGVVVLYIL) traverse the membrane as a helical segment. Residues 219 to 250 (AQADWKRPSQAEEQALSMDFKTLTEGDSPSPQ) are Cytoplasmic-facing. A heme b-binding site is contributed by Lys-224. Phosphoserine is present on residues Ser-246 and Ser-248.

Heme b serves as cofactor. Abundantly distributed in a number of neuroendocrine tissues.

It localises to the cytoplasmic vesicle. Its subcellular location is the secretory vesicle. The protein resides in the chromaffin granule membrane. The catalysed reaction is monodehydro-L-ascorbate radical(out) + L-ascorbate(in) = monodehydro-L-ascorbate radical(in) + L-ascorbate(out). Its function is as follows. Transmembrane reductase that uses ascorbate as an electron donor in the cytoplasm and transfers electrons across membranes to reduce monodehydro-L-ascorbate radical in the lumen of secretory vesicles. It is therefore involved the regeneration and homeostasis within secretory vesicles of ascorbate which in turn provides reducing equivalents needed to support the activity of intravesicular enzymes. The sequence is that of Transmembrane ascorbate-dependent reductase CYB561 from Mus musculus (Mouse).